The chain runs to 275 residues: 3-methyl-2-oxobutanoate hydroxymethyltransferase (275 aa).

Residues Asp-49 and Asp-88 each contribute to the Mg(2+) site. 3-methyl-2-oxobutanoate is bound by residues 49 to 50, Asp-88, and Lys-118; that span reads DS. Glu-120 serves as a coordination point for Mg(2+). The active-site Proton acceptor is the Glu-187.

Belongs to the PanB family. In terms of assembly, homodecamer; pentamer of dimers. Mg(2+) serves as cofactor.

The protein localises to the cytoplasm. The enzyme catalyses 3-methyl-2-oxobutanoate + (6R)-5,10-methylene-5,6,7,8-tetrahydrofolate + H2O = 2-dehydropantoate + (6S)-5,6,7,8-tetrahydrofolate. It functions in the pathway cofactor biosynthesis; (R)-pantothenate biosynthesis; (R)-pantoate from 3-methyl-2-oxobutanoate: step 1/2. Its function is as follows. Catalyzes the reversible reaction in which hydroxymethyl group from 5,10-methylenetetrahydrofolate is transferred onto alpha-ketoisovalerate to form ketopantoate. The protein is 3-methyl-2-oxobutanoate hydroxymethyltransferase of Rhodospirillum centenum (strain ATCC 51521 / SW).